We begin with the raw amino-acid sequence, 881 residues long: Phosphoenolpyruvate carboxylase (881 aa).

Catalysis depends on residues histidine 139 and lysine 544.

It belongs to the PEPCase type 1 family. Mg(2+) is required as a cofactor.

The catalysed reaction is oxaloacetate + phosphate = phosphoenolpyruvate + hydrogencarbonate. Functionally, forms oxaloacetate, a four-carbon dicarboxylic acid source for the tricarboxylic acid cycle. This Marinobacter nauticus (strain ATCC 700491 / DSM 11845 / VT8) (Marinobacter aquaeolei) protein is Phosphoenolpyruvate carboxylase.